The primary structure comprises 346 residues: Magnesium-chelatase 38 kDa subunit (346 aa).

Residue 34–41 participates in ATP binding; sequence GHRGTGKS.

Belongs to the Mg-chelatase subunits D/I family.

It catalyses the reaction protoporphyrin IX + Mg(2+) + ATP + H2O = Mg-protoporphyrin IX + ADP + phosphate + 3 H(+). The protein operates within porphyrin-containing compound metabolism; bacteriochlorophyll biosynthesis. Involved in bacteriochlorophyll biosynthesis; introduces a magnesium ion into protoporphyrin IX to yield Mg-protoporphyrin IX. In Chlorobaculum parvum (strain DSM 263 / NCIMB 8327) (Chlorobium vibrioforme subsp. thiosulfatophilum), this protein is Magnesium-chelatase 38 kDa subunit (bchI).